We begin with the raw amino-acid sequence, 1247 residues long: MRSRSNSGVRLDYYQRIVHRLILAHQEPVTGLFPASNVNSHAWIRDNVYCILAVWGLSMAYKKIADQDEDRAKCYELEQSCVKLMRGLLMAMMNQKDKVEKFKMTQSPYDSLHAKYSSKNGLPVVDDNEWGHLQIDAVSLYLLILAQMTASGLQIVFSLDEVSFIQNLVFYIESAYSIPDYGIWERGDKTNHGEPELNASSIGMAKAALEAMNELDLFGARGGPASVIHVLADEAHKCQAVLQSMLPRESNSKELDSGLLCVIGFPAFAVDDAQLIHNTKDAILSRLQGKYGCKRFLRDGYRTPKEDPSRLYYERWELRMFENIECEWPLFYCYLILFHAFQSDKRAVEEYASRLEKIMVRSEDGILLVPESYAVPQDLVGFEYQKPGSQVREVVGRCPFLWGQSLFILGRLLQEGFLAVGELDPLNRRLGAQKKPDVVVQVVIIAEDNEIRDKLAEHDLHVQTIAEVAPIEVQPARVLSHLYTYLGRNRKLGLSGRKSRDVGILSTSKLYSLKDRIFAFTPQFADLSRFYIASDNELMIDILKGEINFLKSAWDLLGRPLVTLVLKRIHLDQDKIPLAMIQTMRKLKSGYINGTRVMLGSLKDFLNTSAITDLSFLGSTEDGYPDRLHPDVQTYLDEHLLRSFSNRSTMNLRGGQLRPRTLRRRMSCKGAIKKTRSINVDSDNLGMEGPSPLTERRLSSIVPPPWLQANKQSHVSVFATTPEEGPTSSPLSLGNDLIRENIYPVDPHHSRSAIDRRSEFVRQQEMPKILIQRHRAETNFADTEVEELIAMLRETENLEEQGDILQYLVDTQGLDFNTAGLGFKNKSEENATPNANNAGMLEEGRVVTVRDLLKGLYEKACQQKLWGLVRHTAGMLGKRVEDLAKAVTDLLVRQKQVTVGMPPNNEHTITAPLPEVELRQLIHDAYGDDESTAMLTQELMVYLAMFIRTEPQLFHEMLRLRVGLIIQVMAKELSRTLNCDGEAASEHLLNLSPFEMKNLLYHILSGKEFAVSSVARGNLSIVSCKSSRVSKKSQIGLGDPEGEDALIATIDDRQGQWLRRRRLDGALNRVPRDFYSRVWTVLEKCQGLAIEGRVLQQSLTQEMTPGELKFALEVETALNQIPQPEYRQLVVEALMVLTLVTEHNMVPSLGGVIYVEHLVHKANQLFLEDQRKVQGDATLCCAKIKDGKEQQQAASGMLLCGGAAYICQHLYDSAPSGSYGTMTYMSRAVALVLDCVPKHGEMECAIS.

Residues 853–883 (LKGLYEKACQQKLWGLVRHTAGMLGKRVEDL) form a calmodulin-binding region. Residues Ser1030 and Ser1033 each carry the phosphoserine modification. The segment at 1052 to 1089 (DRQGQWLRRRRLDGALNRVPRDFYSRVWTVLEKCQGLA) is calmodulin-binding. Cys1244 carries S-farnesyl cysteine lipidation.

This sequence belongs to the phosphorylase b kinase regulatory chain family. Although the final Cys may be farnesylated, the terminal tripeptide is probably not removed, and the C-terminus is not methylated.

The protein resides in the cell membrane. It participates in glycan biosynthesis; glycogen metabolism. Phosphorylase b kinase catalyzes the phosphorylation of serine in certain substrates, including troponin I. The alpha chain may bind calmodulin. The protein is Probable phosphorylase b kinase regulatory subunit alpha of Drosophila melanogaster (Fruit fly).